The chain runs to 168 residues: Photosystem I assembly protein Ycf3 (168 aa).

TPR repeat units follow at residues 35 to 68, 72 to 105, and 120 to 153; these read AFTY…EIDP, SYIL…NPFL, and GEQA…TPGN.

Belongs to the Ycf3 family.

The protein localises to the plastid. The protein resides in the chloroplast thylakoid membrane. In terms of biological role, essential for the assembly of the photosystem I (PSI) complex. May act as a chaperone-like factor to guide the assembly of the PSI subunits. In Atropa belladonna (Belladonna), this protein is Photosystem I assembly protein Ycf3.